A 261-amino-acid chain; its full sequence is Putative ankyrin repeat protein L99 (261 aa).

ANK repeat units follow at residues 21 to 50, 51 to 80, 81 to 110, 112 to 140, 142 to 170, 171 to 203, and 231 to 259; these read KVNP…DVHA, HEDY…NIHS, DRDL…NVNA, QNSA…NIHA, NNFC…DINA, DNGA…IDNC, and NELK…NINS.

In Acanthamoeba polyphaga (Amoeba), this protein is Putative ankyrin repeat protein L99.